The sequence spans 334 residues: Probable type II restriction enzyme HindVP (334 aa).

The enzyme catalyses Endonucleolytic cleavage of DNA to give specific double-stranded fragments with terminal 5'-phosphates.. A P subtype restriction enzyme that recognizes the double-stranded sequence 5'-GRCGYC-3'; the cleavage site is unknown. The polypeptide is Probable type II restriction enzyme HindVP (hindVRP) (Haemophilus influenzae (strain ATCC 51907 / DSM 11121 / KW20 / Rd)).